The sequence spans 90 residues: Putative sodium channel toxin Ts28 (90 aa).

The first 23 residues, 1–23 (MKISLVTWLITALCLMEIEEIDG), serve as a signal peptide directing secretion. The LCN-type CS-alpha/beta domain occupies 26–86 (PGNYPVDFQG…FWDVMKKQCD (61 aa)). Intrachain disulfides connect Cys40-Cys60, Cys46-Cys65, and Cys50-Cys67.

The protein belongs to the long (3 C-C) scorpion toxin superfamily. In terms of assembly, monomer (edited version) and heterodimer (non-edited version) of this alpha chain and a beta chain (AC P0CI43). In terms of tissue distribution, expressed by the venom gland.

It localises to the secreted. Functionally, the edited BmKBTx-like may modulate voltage-gated sodium channels (Nav). The non-edited form is able to form a heterodimer. In orthologs, a heterodimer with LVP beta-chain induces lipolysis in rat adipocytes, which is mediated through the beta-2 adrenergic receptor pathway (ADRB2). Since no LVP beta-chains have been identified in the venom of this scorpion, it is possible that this protein is not involved in a lipolysis process. The chain is Putative sodium channel toxin Ts28 from Tityus serrulatus (Brazilian scorpion).